A 533-amino-acid polypeptide reads, in one-letter code: Flavin-containing monooxygenase 5 (533 aa).

Residue arginine 5 is modified to Dimethylated arginine. FAD is bound by residues glycine 10–serine 14, glutamate 33, and leucine 41–tryptophan 42. Serine 54 carries the post-translational modification Phosphoserine. The residue at position 56 (tyrosine 56) is a Phosphotyrosine. The residue at position 58 (serine 58) is a Phosphoserine. An FAD-binding site is contributed by asparagine 62–threonine 63. Serine 196–aspartate 199 contributes to the NADP(+) binding site. Residue threonine 284 is modified to Phosphothreonine. Position 401 is a phosphoserine (serine 401). A helical transmembrane segment spans residues leucine 513–phenylalanine 533.

It belongs to the FMO family. FAD is required as a cofactor.

Its subcellular location is the microsome membrane. The protein localises to the endoplasmic reticulum membrane. The enzyme catalyses N,N-dimethylaniline + NADPH + O2 + H(+) = N,N-dimethylaniline N-oxide + NADP(+) + H2O. It catalyses the reaction NADPH + O2 + H(+) = H2O2 + NADP(+). It carries out the reaction heptan-2-one + NADPH + O2 + H(+) = pentyl acetate + NADP(+) + H2O. The catalysed reaction is octan-3-one + NADPH + O2 + H(+) = pentyl propanoate + NADP(+) + H2O. The enzyme catalyses octan-3-one + NADPH + O2 + H(+) = ethyl hexanoate + NADP(+) + H2O. It catalyses the reaction hexan-3-one + NADPH + O2 + H(+) = ethyl butanoate + NADP(+) + H2O. It carries out the reaction hexan-3-one + NADPH + O2 + H(+) = propyl propanoate + NADP(+) + H2O. The catalysed reaction is heptan-4-one + NADPH + O2 + H(+) = propyl butanoate + NADP(+) + H2O. The enzyme catalyses (2E)-geranial + NADPH + O2 + H(+) = (1E)-2,6-dimethylhepta-1,5-dien-1-yl formate + NADP(+) + H2O. It catalyses the reaction sulcatone + NADPH + O2 + H(+) = 4-methylpent-3-en-1-yl acetate + NADP(+) + H2O. In terms of biological role, acts as a Baeyer-Villiger monooxygenase on a broad range of substrates. Catalyzes the insertion of an oxygen atom into a carbon-carbon bond adjacent to a carbonyl, which converts ketones to esters. Active on diverse carbonyl compounds, whereas soft nucleophiles are mostly non- or poorly reactive. In contrast with other forms of FMO it is non- or poorly active on 'classical' substrates such as drugs, pesticides, and dietary components containing soft nucleophilic heteroatoms. Able to oxidize drug molecules bearing a carbonyl group on an aliphatic chain, such as nabumetone and pentoxifylline. Also, in the absence of substrates, shows slow but yet significant NADPH oxidase activity. Acts as a positive modulator of cholesterol biosynthesis as well as glucose homeostasis, promoting metabolic aging via pleiotropic effects. The polypeptide is Flavin-containing monooxygenase 5 (Rattus norvegicus (Rat)).